The following is a 599-amino-acid chain: Elongation factor 4 (599 aa).

The 183-residue stretch at 5–187 folds into the tr-type G domain; that stretch reads SHIRNFSIIA…VLIKSVPAPV (183 aa). Residues 17–22 and 134–137 each bind GTP; these read DHGKST and NKID.

This sequence belongs to the TRAFAC class translation factor GTPase superfamily. Classic translation factor GTPase family. LepA subfamily.

Its subcellular location is the cell inner membrane. It carries out the reaction GTP + H2O = GDP + phosphate + H(+). Its function is as follows. Required for accurate and efficient protein synthesis under certain stress conditions. May act as a fidelity factor of the translation reaction, by catalyzing a one-codon backward translocation of tRNAs on improperly translocated ribosomes. Back-translocation proceeds from a post-translocation (POST) complex to a pre-translocation (PRE) complex, thus giving elongation factor G a second chance to translocate the tRNAs correctly. Binds to ribosomes in a GTP-dependent manner. This Saccharophagus degradans (strain 2-40 / ATCC 43961 / DSM 17024) protein is Elongation factor 4.